The chain runs to 117 residues: Large ribosomal subunit protein uL22 (117 aa).

It belongs to the universal ribosomal protein uL22 family. In terms of assembly, part of the 50S ribosomal subunit.

Its function is as follows. This protein binds specifically to 23S rRNA; its binding is stimulated by other ribosomal proteins, e.g. L4, L17, and L20. It is important during the early stages of 50S assembly. It makes multiple contacts with different domains of the 23S rRNA in the assembled 50S subunit and ribosome. The globular domain of the protein is located near the polypeptide exit tunnel on the outside of the subunit, while an extended beta-hairpin is found that lines the wall of the exit tunnel in the center of the 70S ribosome. The sequence is that of Large ribosomal subunit protein uL22 from Leptospira biflexa serovar Patoc (strain Patoc 1 / ATCC 23582 / Paris).